Reading from the N-terminus, the 144-residue chain is DNA polymerase III subunit chi (144 aa).

Belongs to the DNA polymerase III chi/HolC chain family. In terms of assembly, DNA polymerase III contains a core (composed of alpha, epsilon and theta chains) that associates with a tau subunit. This core dimerizes to form the POLIII' complex. PolIII' associates with the gamma complex (composed of gamma, delta, delta', psi and chi chains) and with the beta chain to form the complete DNA polymerase III complex. Interacts directly with the psi subunit (holD). The only subunit of the DNA polymerase III holoenzyme known to interact with single-stranded DNA binding protein (SSB), interacts directly with DNA helicase YoaA.

The enzyme catalyses DNA(n) + a 2'-deoxyribonucleoside 5'-triphosphate = DNA(n+1) + diphosphate. Its function is as follows. Part of the beta sliding clamp loading complex, which hydrolyzes ATP to load the beta clamp onto primed DNA to form the DNA replication pre-initiation complex. DNA polymerase III is a complex, multichain enzyme responsible for most of the replicative synthesis in bacteria. This DNA polymerase also exhibits 3' to 5' exonuclease activity. This subunit may stabilize YoaA and/or stimulate the helicase activity of YoaA. In Haemophilus influenzae (strain ATCC 51907 / DSM 11121 / KW20 / Rd), this protein is DNA polymerase III subunit chi (holC).